The chain runs to 369 residues: Tyrosine-protein phosphatase non-receptor type 5 (369 aa).

A Phosphoserine; by PKA modification is found at S49. The residue at position 59 (T59) is a Phosphothreonine; by MAPK. At S72 the chain carries Phosphoserine; by MAPK. The Tyrosine-protein phosphatase domain occupies L104–Y359. Substrate is bound by residues D265, C300 to R306, and Q344. C300 (phosphocysteine intermediate) is an active-site residue.

It belongs to the protein-tyrosine phosphatase family. Non-receptor class subfamily. Phosphorylation at Ser-49 by PKA deactivates PTPN5. Phosphorylation at Thr-59 and Ser-72 by MAPKs stabilizes the phosphatase, dephosphorylation of these sites results in ubiquitin-mediated degradation of the active phosphatase. Expressed in the central nervous system except in the cerebellum. Enriched within the striatum relative to other brain areas.

It localises to the cytoplasm. The enzyme catalyses O-phospho-L-tyrosyl-[protein] + H2O = L-tyrosyl-[protein] + phosphate. May regulate the activity of several effector molecules involved in synaptic plasticity and neuronal cell survival, including MAPKs, Src family kinases and NMDA receptors. The polypeptide is Tyrosine-protein phosphatase non-receptor type 5 (Ptpn5) (Rattus norvegicus (Rat)).